Reading from the N-terminus, the 693-residue chain is MKIFREVFELGNKEIILETGGMARQADGSVTVSCGNNVVLVTTVVKKSVADGTDFFPLSVHYLEKTYAAGKIPGGFLRREGRPSEEQILISRLIDRSIRPSFPDGFFNEIQIVATVLSYDGAFSPDILALIGASASLAISGAPYDDVVAGVRVGYTNGKYILNPNKQDLRDSDLDLVVSGTYDAILMVESEANSLPESVMLGGILYAHKHLKTIINSINRLAKVASKPRIEYSIYQINKFLKSQIKSQFFGEIKNTYTIALKQERNLKLNAIRKNVLEYIFSSDVDGNEYTEKEILEAFHDIEKDLVRSNILEGKPRIDGRCTETIRPINVKIGVLPGVHGSALFTRGETQALVVTTLGSDRDAQLVESLDGIEKCRYMLHYNFPPYSVGECGMVGMAPKRREIGHANLAKRATQAVFPNEEAYPYVVRVVSEILESNGSSSMATVCGSSLSMMDAGVPIAEPVAGIAMGLIKDGAKYAVLSDILGDEDHLGDMDFKVAGTRYGVTALQMDIKIKGISREILEQALEQARVGRLHILGIMNEVIKEHKEAVSDVAPQIHVMNINPAKIKDVVGRGGATVKGIVEKTGAQIDTSDSGEVKVFAKDKKSMDMAVAMIEEIVAEVEEGQVYKGKIVKLLDSGVFVNLLGSQDGYLPFSEIEQAGMKTNSLVEGQGLEVLVQNIDRGGRVKLSLVAR.

Residues D489 and D495 each coordinate Mg(2+). Residues 556–615 form the KH domain; the sequence is PQIHVMNINPAKIKDVVGRGGATVKGIVEKTGAQIDTSDSGEVKVFAKDKKSMDMAVAMI. One can recognise an S1 motif domain in the interval 625–693; sequence GQVYKGKIVK…GRVKLSLVAR (69 aa).

It belongs to the polyribonucleotide nucleotidyltransferase family. Component of the RNA degradosome, which is a multiprotein complex involved in RNA processing and mRNA degradation. Mg(2+) is required as a cofactor.

Its subcellular location is the cytoplasm. It carries out the reaction RNA(n+1) + phosphate = RNA(n) + a ribonucleoside 5'-diphosphate. Involved in mRNA degradation. Catalyzes the phosphorolysis of single-stranded polyribonucleotides processively in the 3'- to 5'-direction. The sequence is that of Polyribonucleotide nucleotidyltransferase from Francisella tularensis subsp. holarctica (strain OSU18).